A 442-amino-acid polypeptide reads, in one-letter code: D-serine dehydratase 2 (442 aa).

Lys-118 carries the N6-(pyridoxal phosphate)lysine modification.

Belongs to the serine/threonine dehydratase family. DsdA subfamily. Monomer. Requires pyridoxal 5'-phosphate as cofactor.

The enzyme catalyses D-serine = pyruvate + NH4(+). The chain is D-serine dehydratase 2 from Escherichia coli O6:K15:H31 (strain 536 / UPEC).